Reading from the N-terminus, the 319-residue chain is Carbonic anhydrase, chloroplastic (319 aa).

Residues 1–98 (MSTINGCLTS…AASKVAQITS (98 aa)) constitute a chloroplast transit peptide.

It belongs to the beta-class carbonic anhydrase family. Homohexamer.

The protein resides in the plastid. The protein localises to the chloroplast stroma. It carries out the reaction hydrogencarbonate + H(+) = CO2 + H2O. Functionally, reversible hydration of carbon dioxide. The sequence is that of Carbonic anhydrase, chloroplastic from Spinacia oleracea (Spinach).